Consider the following 262-residue polypeptide: Serine O-acetyltransferase (262 aa).

Cysteine 107 (acyl-thioester intermediate) is an active-site residue. A substrate-binding site is contributed by lysine 128. Histidine 200 (proton acceptor) is an active-site residue. Glutamate 202 is an active-site residue. Residue arginine 214 coordinates substrate.

This sequence belongs to the MetA family.

It is found in the cytoplasm. It carries out the reaction L-serine + acetyl-CoA = O-acetyl-L-serine + CoA. The catalysed reaction is L-homoserine + acetyl-CoA = O-acetyl-L-homoserine + CoA. It participates in amino-acid biosynthesis; L-cysteine biosynthesis; L-cysteine from L-serine: step 1/2. Transfers an acetyl group from acetyl-CoA to L-serine, forming acetyl-L-serine. In vitro, also has homoserine acetyl transferase activity. The polypeptide is Serine O-acetyltransferase (Lactobacillus acidophilus).